Here is a 229-residue protein sequence, read N- to C-terminus: Uridylate cyclase (229 aa).

The region spanning 47–178 is the Guanylate cyclase domain; sequence TVLYADLDGS…RAANYAAKLT (132 aa). Y50 serves as a coordination point for a ribonucleoside 5'-triphosphate. Residues D52 and D96 each coordinate Mn(2+). Position 97 (R97) interacts with a ribonucleoside 5'-triphosphate.

It belongs to the adenylyl cyclase class-4/guanylyl cyclase family. Pyrimidine cyclase subfamily. In terms of assembly, homodimer. It depends on Mn(2+) as a cofactor.

Its subcellular location is the cytoplasm. The enzyme catalyses UTP = 3',5'-cyclic UMP + diphosphate. Functionally, pycsar (pyrimidine cyclase system for antiphage resistance) provides immunity against bacteriophage. The pyrimidine cyclase (PycC) synthesizes cyclic nucleotides in response to infection; these serve as specific second messenger signals. The signals activate the adjacent effector, leading to bacterial cell death and abortive phage infection. A clade B Pycsar system. The pyrimidine cyclase gene of a two-gene Pycsar system, generates cyclic UMP (cUMP) from UTP, has little to no activity on ATP, CTP or GTP. Expression of this and adjacent effector BcPycTIR (AC A0A0J5WTU0) probably confers resistance to bacteriophage. The genes are probably only expressed in response to bacteriophage infection. The chain is Uridylate cyclase from Burkholderia cepacia (Pseudomonas cepacia).